The following is a 107-amino-acid chain: Large ribosomal subunit protein uL24 (107 aa).

The protein belongs to the universal ribosomal protein uL24 family. Part of the 50S ribosomal subunit.

One of two assembly initiator proteins, it binds directly to the 5'-end of the 23S rRNA, where it nucleates assembly of the 50S subunit. Functionally, one of the proteins that surrounds the polypeptide exit tunnel on the outside of the subunit. In Streptomyces avermitilis (strain ATCC 31267 / DSM 46492 / JCM 5070 / NBRC 14893 / NCIMB 12804 / NRRL 8165 / MA-4680), this protein is Large ribosomal subunit protein uL24.